A 219-amino-acid chain; its full sequence is Agamous-like MADS-box protein AGL19 (219 aa).

The MADS-box domain occupies 1–61 (MVRGKTEMKR…SKLYEFSSSS (61 aa)). Residues 77 to 96 (GNNHKRNDNSQQARDETSGL) form a disordered region. The K-box domain occupies 86-176 (SQQARDETSG…KEKWLGMGTA (91 aa)).

As to quaternary structure, interacts with SOC1 and AGL21. As to expression, mostly expressed in the outer layers of the root meristem (lateral root cap and epidermis) and in the central cylinder cells of mature roots. Also present in rosette leaves and seedlings and, to a lesser extent, in cauline leaves and flowers. Enriched in apices including the shoot apical meristem and developing leaf primordia.

Its subcellular location is the nucleus. Functionally, probable transcription factor that promotes flowering, especially in response to vernalization by short periods of cold, in an FLC-inpedendent manner. The chain is Agamous-like MADS-box protein AGL19 (AGL19) from Arabidopsis thaliana (Mouse-ear cress).